A 156-amino-acid polypeptide reads, in one-letter code: MSRKNQAPKREVLPDPLYNSKIVTRLINRVMLDGKRGTAATIVYDAFNAIKEATGNDALEVFETAMDNIMPVLEVRARRVGGSNYQVPVEVRPERRTTLGLRWLVNASRARGEHTMKDRLAKEIMDAANNTGASVKKREDTHKMAEANRAFAHFRW.

The protein belongs to the universal ribosomal protein uS7 family. Part of the 30S ribosomal subunit. Contacts proteins S9 and S11.

In terms of biological role, one of the primary rRNA binding proteins, it binds directly to 16S rRNA where it nucleates assembly of the head domain of the 30S subunit. Is located at the subunit interface close to the decoding center, probably blocks exit of the E-site tRNA. This is Small ribosomal subunit protein uS7 from Streptococcus pyogenes serotype M1.